We begin with the raw amino-acid sequence, 675 residues long: Transketolase, chloroplastic (675 aa).

Thiamine diphosphate-binding positions include H78 and G127–L129. Residue D168 participates in Mg(2+) binding. G169, E173, and N198 together coordinate thiamine diphosphate. Mg(2+) contacts are provided by N198 and I200. Position 275 (H275) interacts with thiamine diphosphate. Substrate-binding residues include H275, R369, and S396. Residues E423 and F450–Y453 each bind thiamine diphosphate. The active-site Proton donor is E423. 3 residues coordinate substrate: H474, D482, and R533.

Homodimer. The cofactor is Mg(2+). It depends on Ca(2+) as a cofactor. Mn(2+) is required as a cofactor. Requires Co(2+) as cofactor. Thiamine diphosphate serves as cofactor.

Its subcellular location is the plastid. The protein resides in the chloroplast thylakoid membrane. The enzyme catalyses D-sedoheptulose 7-phosphate + D-glyceraldehyde 3-phosphate = aldehydo-D-ribose 5-phosphate + D-xylulose 5-phosphate. It participates in carbohydrate biosynthesis; Calvin cycle. Functionally, catalyzes the reversible transfer of a two-carbon ketol group from fructose-6-phosphate or sedoheptulose-7-phosphate to glyceraldehyde-3-phosphate to yield xylulose-5-phosphate and erythrose-4-phosphate or ribose-5-phosphate, respectively. This is Transketolase, chloroplastic from Zea mays (Maize).